The primary structure comprises 1031 residues: Receptor-like protein EIX1 (1031 aa).

The N-terminal stretch at 1 to 29 (MDKWKYARLAQFLFTLSLLFLETSFGLGG) is a signal peptide. Asn-30 carries N-linked (GlcNAc...) asparagine glycosylation. The tract at residues 30-113 (NKTLCLDKER…PRLTGKLSPS (84 aa)) is N-cap. Over 30–971 (NKTLCLDKER…DEEEEFPSLE (942 aa)) the chain is Extracellular. Residues 117 to 140 (LEYLNYLDLSVNEFERSEIPRFIG) form an LRR 1 repeat. Residues 142–165 (LKRLEYLNLSASFFSGVIPIQFQN) form an LRR 2; degenerate repeat. Residues Asn-149 and Asn-165 are each glycosylated (N-linked (GlcNAc...) asparagine). 4 LRR repeats span residues 166–189 (LTSLRTLDLGENNLIVKDLRWLSH), 191–215 (SSLEFLSLSSSNFQVNNWFQEITKV), 216–240 (PSLKELDLSGCGLSKLVPSQADLAN), and 243–266 (LISLSVLHLCCNEFSSSSEYSWVF). N-linked (GlcNAc...) asparagine glycosylation occurs at Asn-240. An N-linked (GlcNAc...) asparagine glycan is attached at Asn-267. 14 LRR repeats span residues 269-292 (TTSLTSIDLLYNQLSGQIDDRFGT), 293-317 (LMYLEHLDLANNLKIEGGVPSSFGN), 318-341 (LTRLRHLDMSNTQTVQWLPELFLR), 346-369 (RKSLEVLGLNENSLFGSIVNATRF), 370-393 (SSLKKLYLQKNMLNGSFMESAGQV), 394-416 (STLEYLDLSENQMRGALPDLALF), 417-440 (PSLRELHLGSNQFRGRIPQGIGKL), 441-463 (SQLRILDVSSNRLEGLPESMGQL), 465-487 (NLESFDASYNVLKGTITESHLSN), 488-509 (LSSLVDLDLSFNSLALKTSFNW), 512-536 (PFQLQVISLPSCNLGPSFPKWLQNQ), 538-559 (NYTVLDISLASISDTLPSWFSS), 561-584 (PPDLKILNLSNNQISGRVSDLIEN), and 586-611 (YGYRVIDLSYNNFSGALPLVPTNVQI). N-linked (GlcNAc...) asparagine glycosylation occurs at Asn-317. Asn-365 and Asn-383 each carry an N-linked (GlcNAc...) asparagine glycan. A glycan (N-linked (GlcNAc...) asparagine) is linked at Asn-487. N-linked (GlcNAc...) asparagine glycans are attached at residues Asn-538, Asn-568, and Asn-597. An LRR 21; degenerate repeat occupies 612–629 (FYLHKNQFFGSISSICRS). LRR repeat units follow at residues 630–654 (RTSPTSLDLSHNQFSGELPDCWMNM), 655–678 (TSLAVLNLAYNNFSGEIPHSLGSL), 679–703 (TNLKALYIRQNSLSGMLPSFSQCQG), 705–725 (QILDLGGNKLTGSIPGWIGTD), 726–750 (LLNLRILSLRFNRLHGSIPSIICQL), and 752–773 (FLQILDLSANGLSGKIPHCFNN). N-linked (GlcNAc...) asparagine glycans are attached at residues Asn-653 and Asn-666. 2 N-linked (GlcNAc...) asparagine glycosylation sites follow: Asn-773 and Asn-781. 4 LRR repeats span residues 823–847 (LLYLKTIDLSSNELIGGVPKEIADM), 848–871 (RGLKSLNLSRNELNGTVIEGIGQM), 872–895 (RMLESLDMSRNQLSGVIPQDLANL), and 896–918 (TFLSVLDLSNNQLSGRIPSSTQL). N-linked (GlcNAc...) asparagine glycans are attached at residues Asn-854, Asn-861, and Asn-894. Residues 919–971 (QSFDRSSYSDNAQLCGPPLQECPGYAPPSPLIDHGSNNNPQEHDEEEEFPSLE) form a C-cap/acidic domain region. Residues 972-992 (FYISMVLSFFVAFWGILGCLI) traverse the membrane as a helical segment. The Cytoplasmic portion of the chain corresponds to 993–1031 (VNSSWRNAYFKFLTDTTSWLDMISRVWFARLKKKLRRAR).

It belongs to the RLP family. In terms of assembly, interacts with EIX elicitor protein.

Its subcellular location is the cell membrane. In terms of biological role, involved in plant defense. Confers resistance to the fungal pathogen T.viride through recognition of the EIX elicitor protein. This chain is Receptor-like protein EIX1, found in Solanum lycopersicum (Tomato).